A 222-amino-acid chain; its full sequence is 7-cyano-7-deazaguanine synthase (222 aa).

Residue 7-17 (LSGGLDSSTVL) coordinates ATP. The Zn(2+) site is built by C191, C199, C202, and C205.

The protein belongs to the QueC family. Zn(2+) serves as cofactor.

The enzyme catalyses 7-carboxy-7-deazaguanine + NH4(+) + ATP = 7-cyano-7-deazaguanine + ADP + phosphate + H2O + H(+). It functions in the pathway purine metabolism; 7-cyano-7-deazaguanine biosynthesis. Functionally, catalyzes the ATP-dependent conversion of 7-carboxy-7-deazaguanine (CDG) to 7-cyano-7-deazaguanine (preQ(0)). The sequence is that of 7-cyano-7-deazaguanine synthase from Trichodesmium erythraeum (strain IMS101).